Reading from the N-terminus, the 358-residue chain is Phenylalanine--tRNA ligase alpha subunit (358 aa).

Glutamate 258 is a binding site for Mg(2+).

The protein belongs to the class-II aminoacyl-tRNA synthetase family. Phe-tRNA synthetase alpha subunit type 1 subfamily. Tetramer of two alpha and two beta subunits. Mg(2+) is required as a cofactor.

It localises to the cytoplasm. The enzyme catalyses tRNA(Phe) + L-phenylalanine + ATP = L-phenylalanyl-tRNA(Phe) + AMP + diphosphate + H(+). This is Phenylalanine--tRNA ligase alpha subunit from Rhodospirillum rubrum (strain ATCC 11170 / ATH 1.1.1 / DSM 467 / LMG 4362 / NCIMB 8255 / S1).